The sequence spans 204 residues: MTDNLQLTHLVDACRWIGAKGWAPATGGNMSIRQNDAFCWLSESGKDKGSLTIDDFLQVDIASNRAPSGRKPSAETGLHTLIYRLFPEANAVLHVHTVNATVLSRLVKETELRISGFEMQKSLTGQSTHLDTVTIPVFDNDQDIDALASRIAHYAQERPFNYGFLLRGHGLTCWGRDVAEARRHLEGLEFLFECEMRLRQLEKI.

His94 and His96 together coordinate Zn(2+).

It belongs to the aldolase class II family. MtnB subfamily. Zn(2+) is required as a cofactor.

It carries out the reaction 5-(methylsulfanyl)-D-ribulose 1-phosphate = 5-methylsulfanyl-2,3-dioxopentyl phosphate + H2O. Its pathway is amino-acid biosynthesis; L-methionine biosynthesis via salvage pathway; L-methionine from S-methyl-5-thio-alpha-D-ribose 1-phosphate: step 2/6. Its function is as follows. Catalyzes the dehydration of methylthioribulose-1-phosphate (MTRu-1-P) into 2,3-diketo-5-methylthiopentyl-1-phosphate (DK-MTP-1-P). This is Methylthioribulose-1-phosphate dehydratase from Enterobacter sp. (strain 638).